The primary structure comprises 351 residues: DNA polymerase IV (351 aa).

Residues 4-184 (FIHIDMDCFY…LPLGKIPGVG (181 aa)) form the UmuC domain. Positions 8 and 102 each coordinate Mg(2+). The active site involves Glu-103.

The protein belongs to the DNA polymerase type-Y family. In terms of assembly, monomer. It depends on Mg(2+) as a cofactor.

It localises to the cytoplasm. It carries out the reaction DNA(n) + a 2'-deoxyribonucleoside 5'-triphosphate = DNA(n+1) + diphosphate. In terms of biological role, poorly processive, error-prone DNA polymerase involved in untargeted mutagenesis. Copies undamaged DNA at stalled replication forks, which arise in vivo from mismatched or misaligned primer ends. These misaligned primers can be extended by PolIV. Exhibits no 3'-5' exonuclease (proofreading) activity. May be involved in translesional synthesis, in conjunction with the beta clamp from PolIII. In Pseudoalteromonas translucida (strain TAC 125), this protein is DNA polymerase IV.